Here is a 391-residue protein sequence, read N- to C-terminus: MQKLINSVQNYAWGSKTALTELYGIANPQQQPMAELWMGAHPKSSSRITTANGETVSLRDAIEKNKTAMLGEAVANRFGELPFLFKVLCAAQPLSIQVHPNKRNSEIGFAKENAAGIPMDAAERNYKDPNHKPELVFALTPFLAMNAFREFSDIVSLLQPVAGAHSAIAHFLQVPNAERLSQLFASLLNMQGEEKSRALAVLKAALNSQQGEPWQTIRVISEYYPDDSGLFSPLLLNVVKLNPGEAMFLFAETPHAYLQGVALEVMANSDNVLRAGLTPKYIDIPELVANVKFEPKPAGELLTAPVKSGAELDFPIPVDDFAFSLHDLALQETSIGQHSAAILFCVEGEAVLRKDEQRLVLKPGESAFIGADESPVNASGTGRLARVYNKL.

Q97, H99, E134, and H255 together coordinate Zn(2+). R274 is an active-site residue.

It belongs to the mannose-6-phosphate isomerase type 1 family. Requires Zn(2+) as cofactor.

It localises to the cytoplasm. It catalyses the reaction D-mannose 6-phosphate = D-fructose 6-phosphate. In terms of biological role, involved in the conversion of glucose to GDP-L-fucose, which can be converted to L-fucose, a capsular polysaccharide. The chain is Mannose-6-phosphate isomerase (manA) from Salmonella typhimurium (strain LT2 / SGSC1412 / ATCC 700720).